Here is a 486-residue protein sequence, read N- to C-terminus: tRNA (uracil-5-)-methyltransferase homolog B (486 aa).

S-adenosyl-L-methionine-binding residues include glutamine 305, glutamate 355, and asparagine 405. Cysteine 433 functions as the Nucleophile in the catalytic mechanism. The active-site Proton acceptor is glutamate 479.

This sequence belongs to the class I-like SAM-binding methyltransferase superfamily. RNA M5U methyltransferase family.

The protein localises to the mitochondrion matrix. It catalyses the reaction uridine(54) in tRNA + S-adenosyl-L-methionine = 5-methyluridine(54) in tRNA + S-adenosyl-L-homocysteine + H(+). The catalysed reaction is a uridine in 12S rRNA + S-adenosyl-L-methionine = a 5-methyluridine in 12S rRNA + S-adenosyl-L-homocysteine + H(+). Functionally, mitochondrial S-adenosyl-L-methionine-dependent methyltransferase that catalyzes the formation of 5-methyl-uridine in tRNAs and 12S rRNA. Catalyzes the methylation of uridine at position 54 (m5U54) in all tRNAs. Specifically methylates the uridine in position 429 of 12S rRNA (m5U429). Does not affect RNA stability or mitochondrial translation. This Pongo abelii (Sumatran orangutan) protein is tRNA (uracil-5-)-methyltransferase homolog B (TRMT2B).